Here is a 95-residue protein sequence, read N- to C-terminus: Trypomastigote decay-accelerating factor (95 aa).

Belongs to the receptors of complement activation (RCA) family.

In terms of biological role, interferes with the efficient assembly of the host C3 convertase. Could protect parasites from complement-mediated lysis by sera from a number of different species. This Trypanosoma cruzi protein is Trypomastigote decay-accelerating factor.